The following is a 243-amino-acid chain: Orotidine 5'-phosphate decarboxylase (243 aa).

Substrate contacts are provided by residues aspartate 19, lysine 41, 69–78 (DLKFFDIPAT), threonine 124, arginine 185, glutamine 194, glycine 214, and arginine 215. The active-site Proton donor is lysine 71.

It belongs to the OMP decarboxylase family. Type 1 subfamily. Homodimer.

The enzyme catalyses orotidine 5'-phosphate + H(+) = UMP + CO2. Its pathway is pyrimidine metabolism; UMP biosynthesis via de novo pathway; UMP from orotate: step 2/2. In terms of biological role, catalyzes the decarboxylation of orotidine 5'-monophosphate (OMP) to uridine 5'-monophosphate (UMP). The sequence is that of Orotidine 5'-phosphate decarboxylase from Xanthomonas campestris pv. campestris (strain B100).